Consider the following 683-residue polypeptide: DNA-directed RNA polymerase subunit beta' (683 aa).

Zn(2+) contacts are provided by Cys-69, Cys-71, Cys-87, and Cys-90. The Mg(2+) site is built by Asp-489, Asp-491, and Asp-493.

It belongs to the RNA polymerase beta' chain family. RpoC1 subfamily. As to quaternary structure, in plastids the minimal PEP RNA polymerase catalytic core is composed of four subunits: alpha, beta, beta', and beta''. When a (nuclear-encoded) sigma factor is associated with the core the holoenzyme is formed, which can initiate transcription. Requires Mg(2+) as cofactor. Zn(2+) serves as cofactor.

Its subcellular location is the plastid. It is found in the chloroplast. The catalysed reaction is RNA(n) + a ribonucleoside 5'-triphosphate = RNA(n+1) + diphosphate. Its function is as follows. DNA-dependent RNA polymerase catalyzes the transcription of DNA into RNA using the four ribonucleoside triphosphates as substrates. The chain is DNA-directed RNA polymerase subunit beta' from Zea mays (Maize).